Reading from the N-terminus, the 81-residue chain is CLAVATA3/ESR (CLE)-related protein 12 (81 aa).

Residues 1 to 31 form the signal peptide; the sequence is MENSNKVPISKIGLIMLMIFSTFFMSPHARR. Residues 55 to 67 are compositionally biased toward basic and acidic residues; the sequence is KRSRTDLEDKAVP. The interval 55-81 is disordered; it reads KRSRTDLEDKAVPGDRLSPGGPNHIHN. Hydroxyproline occurs at positions 73 and 76. Pro-76 carries an O-linked (Ara...) hydroxyproline glycan.

This sequence belongs to the CLV3/ESR signal peptide family. Post-translationally, the O-glycosylation (arabinosylation) of the hydroxyproline Pro-76 enhances binding affinity of the CLE12p peptide for its receptor. Expressed in young nodules throughout the central tissue. Expressed in the apical region of elongated nodules, corresponding to the meristematic and early infection zones.

Its subcellular location is the secreted. The protein resides in the extracellular space. Signaling peptide involved in the regulation of nodulation. Moves from root to shoot to function with the receptor kinase SUNN, in a signaling pathway that plays roles during cellular differentiation, both at the onset of nodulation, and later during nodule meristem development and subsequent homeostasis. Interacts with SUNN signaling to control nodule numbers. SUNN is involved in the autoregulation of nodulation (AON), a long distance systemic signaling from root to shoot and back again, which allows legumes to limit the number of root nodules formed based on available nitrogen and previous rhizobial colonization. The polypeptide is CLAVATA3/ESR (CLE)-related protein 12 (Medicago truncatula (Barrel medic)).